The sequence spans 154 residues: Pro-corazonin (154 aa).

An N-terminal signal peptide occupies residues 1–19 (MLRLLLLPLFLFTLSMCMG). At Q20 the chain carries Pyrrolidone carboxylic acid. N30 carries the post-translational modification Asparagine amide. The propeptide occupies 70-154 (LERCLSQLQR…SAEPNVFGKH (85 aa)). A disordered region spans residues 91 to 119 (DFNANRVDPDPENSAHPRLSNSNGENVLY). Polar residues predominate over residues 109 to 119 (LSNSNGENVLY).

It belongs to the corazonin family. From late embryo to larva, expression is consistently detected in three neuronal groups: dorso-lateral neurons (DL), dorso-medial neurons (DM), and neurons in the ventral nerve cord (vCrz). Both the vCrz and DM groups die via programmed cell death during metamorphosis, whereas the DL neurons persist to adulthood. In adults, expression is seen in a cluster of six to eight neurons per lobe in the pars lateralis (DLP), in numerous neuronal cells in the optic lobes, and in a novel group of four abdominal ganglionic neurons present only in males (ms-aCrz). Projections of the ms-aCrz neurons terminate within the ventral nerve cord, implying a role as interneurons. Terminals of the DLP neurons are found in the retrocerebral complex that produces juvenile hormone and adipokinetic hormone, located in the vicinity of terminals emanating from PDF-containing pacemaking neurons.

The protein localises to the secreted. In terms of biological role, cardioactive peptide. Corazonin is probably involved in the physiological regulation of the heart beat. Clock (Clk) and cycle (cyc) proteins negatively regulate Crz transcription in a cell-specific manner. This Drosophila melanogaster (Fruit fly) protein is Pro-corazonin (Crz).